Consider the following 344-residue polypeptide: Dihydroorotase (344 aa).

2 residues coordinate Zn(2+): histidine 13 and histidine 15. Residues 15 to 17 (HLR) and asparagine 41 contribute to the substrate site. Lysine 99, histidine 136, and histidine 174 together coordinate Zn(2+). Position 99 is an N6-carboxylysine (lysine 99). A substrate-binding site is contributed by histidine 136. Residue leucine 219 participates in substrate binding. Aspartate 247 is a binding site for Zn(2+). The active site involves aspartate 247. 2 residues coordinate substrate: histidine 251 and alanine 263.

The protein belongs to the metallo-dependent hydrolases superfamily. DHOase family. Class II DHOase subfamily. In terms of assembly, homodimer. It depends on Zn(2+) as a cofactor.

The catalysed reaction is (S)-dihydroorotate + H2O = N-carbamoyl-L-aspartate + H(+). Its pathway is pyrimidine metabolism; UMP biosynthesis via de novo pathway; (S)-dihydroorotate from bicarbonate: step 3/3. Its function is as follows. Catalyzes the reversible cyclization of carbamoyl aspartate to dihydroorotate. The chain is Dihydroorotase from Microcystis aeruginosa (strain NIES-843 / IAM M-2473).